A 596-amino-acid polypeptide reads, in one-letter code: Ulvan-active sulfatase (596 aa).

The signal sequence occupies residues 1-27 (MLFLRFKFFNNRLLFVSVLCFVICVSC). Positions 58, 59, 97, 306, and 307 each coordinate Ca(2+). Cysteine 97 (nucleophile) is an active-site residue. A 3-oxoalanine (Cys) modification is found at cysteine 97.

It belongs to the sulfatase family. It depends on Ca(2+) as a cofactor. The conversion to 3-oxoalanine (also known as C-formylglycine, FGly), of a serine or cysteine residue in prokaryotes and of a cysteine residue in eukaryotes, is critical for catalytic activity.

The protein resides in the periplasm. In terms of biological role, sulfatase involved in ulvan degradation. Ulvan is the main polysaccharide component of the Ulvales (green seaweed) cell wall. It is composed of disaccharide building blocks comprising 3-sulfated rhamnose (Rha3S) linked to D-glucuronic acid (GlcA), L-iduronic acid (IduA), or D-xylose (Xyl). The sulfatase desulfates Xyl2S-Rha3S, product of the degradation of ulvan by endo-acting alpha-1,4-L-rhamnosidase, to Xyl-Rha3S. In Formosa agariphila (strain DSM 15362 / KCTC 12365 / LMG 23005 / KMM 3901 / M-2Alg 35-1), this protein is Ulvan-active sulfatase.